A 721-amino-acid chain; its full sequence is Homeobox-leucine zipper protein HDG2 (721 aa).

The segment at 17–70 (NNHNYNHEDNNNEGFLRDDEFDSPNTKSGSENQEGGSGNDQDPLHPNKKKRYHR) is disordered. Basic and acidic residues predominate over residues 21–34 (YNHEDNNNEGFLRD). Residues 64–123 (KKKRYHRHTQLQIQEMEAFFKECPHPDDKQRKQLSRELNLEPLQVKFWFQNKRTQMKNHH) constitute a DNA-binding region (homeobox). The stretch at 120–194 (KNHHERHENS…DRISAIAAKY (75 aa)) forms a coiled coil. Residues 242–468 (TESDKPVIID…LDRQCERLAS (227 aa)) enclose the START domain.

The protein belongs to the HD-ZIP homeobox family. Class IV subfamily. In terms of assembly, interacts with AIL7/PLT7, ANT, BBM and AIL1. Expressed in hairless cell files of the hypocotyl epidermis. Expressed in shoot apical meristem (SAM) with higher levels in L1 cells and the epidermal layer of young leaves. Expressed in primary root tips, in the L1 of apical inflorescence meristems, early flower primordia, carpel epidermis, ovule primordia, nucellus, chalaze and seed coat.

The protein localises to the nucleus. Probable transcription factor. Involved, together with PDF2, in the regulation of flower organs development by promoting the expression of APETALA 3 (AP3) in the epidermis and internal cell layers of developing flowers. The protein is Homeobox-leucine zipper protein HDG2 of Arabidopsis thaliana (Mouse-ear cress).